Here is a 120-residue protein sequence, read N- to C-terminus: NAD(P)H-quinone oxidoreductase subunit 3, chloroplastic (120 aa).

3 helical membrane passes run 9–29, 64–84, and 88–108; these read IFWA…LISG, MFAL…PWAM, and VLGV…IVGS.

This sequence belongs to the complex I subunit 3 family. NDH is composed of at least 16 different subunits, 5 of which are encoded in the nucleus.

The protein localises to the plastid. It localises to the chloroplast thylakoid membrane. The enzyme catalyses a plastoquinone + NADH + (n+1) H(+)(in) = a plastoquinol + NAD(+) + n H(+)(out). It catalyses the reaction a plastoquinone + NADPH + (n+1) H(+)(in) = a plastoquinol + NADP(+) + n H(+)(out). NDH shuttles electrons from NAD(P)H:plastoquinone, via FMN and iron-sulfur (Fe-S) centers, to quinones in the photosynthetic chain and possibly in a chloroplast respiratory chain. The immediate electron acceptor for the enzyme in this species is believed to be plastoquinone. Couples the redox reaction to proton translocation, and thus conserves the redox energy in a proton gradient. This Amborella trichopoda protein is NAD(P)H-quinone oxidoreductase subunit 3, chloroplastic.